The chain runs to 609 residues: NADH-ubiquinone oxidoreductase chain 5 (609 aa).

Transmembrane regions (helical) follow at residues 6–26 (SSIL…MTNL), 35–55 (YATS…LLFF), 84–104 (YFSI…MQFS), 116–138 (RFIK…NNLF), 140–160 (LFIG…WWYG), 171–191 (AILY…WFCL), 240–260 (TPVS…FLMI), 272–292 (IMTA…ICAL), 300–319 (IVAF…LGIN), 330–350 (THAF…HSLN), 365–385 (MPFT…MPFL), 409–429 (MITL…IYFV), 456–476 (LALG…PTNI), 481–501 (MPWH…AIAL), and 581–601 (GLIK…FILH).

The protein belongs to the complex I subunit 5 family. In terms of assembly, core subunit of respiratory chain NADH dehydrogenase (Complex I) which is composed of 45 different subunits.

It localises to the mitochondrion inner membrane. The catalysed reaction is a ubiquinone + NADH + 5 H(+)(in) = a ubiquinol + NAD(+) + 4 H(+)(out). Its function is as follows. Core subunit of the mitochondrial membrane respiratory chain NADH dehydrogenase (Complex I) which catalyzes electron transfer from NADH through the respiratory chain, using ubiquinone as an electron acceptor. Essential for the catalytic activity and assembly of complex I. This is NADH-ubiquinone oxidoreductase chain 5 from Rattus norvegicus (Rat).